The primary structure comprises 329 residues: NAC domain-containing protein 71 (329 aa).

The NAC domain maps to 9–166; that stretch reads LPPGFRFHPT…DWVLCRIYNK (158 aa). Residues 228-281 are disordered; sequence RSGSADRDSMPRLHTDSSGSEHVLSPSPSPDDFPGGGDHDYAESQPSGGCGGWP. Basic and acidic residues predominate over residues 230-242; it reads GSADRDSMPRLHT.

As to quaternary structure, interacts with NAC048 and NAC002. Expressed in roots and embryo. Weakly expressed in callus.

It is found in the nucleus. Its function is as follows. Transcription activator that binds to the promoter of the stress response gene LEA19. Involved in tolerance to abiotic stresses. In Oryza sativa subsp. japonica (Rice), this protein is NAC domain-containing protein 71.